Reading from the N-terminus, the 876-residue chain is Alanine--tRNA ligase (876 aa).

Residue Lys74 is modified to N6-acetyllysine. Positions 564, 568, 666, and 670 each coordinate Zn(2+).

The protein belongs to the class-II aminoacyl-tRNA synthetase family. Homotetramer. It depends on Zn(2+) as a cofactor.

Its subcellular location is the cytoplasm. It catalyses the reaction tRNA(Ala) + L-alanine + ATP = L-alanyl-tRNA(Ala) + AMP + diphosphate. Catalyzes the attachment of alanine to tRNA(Ala) in a two-step reaction: alanine is first activated by ATP to form Ala-AMP and then transferred to the acceptor end of tRNA(Ala). Also edits incorrectly charged Ser-tRNA(Ala) and Gly-tRNA(Ala) via its editing domain. This chain is Alanine--tRNA ligase, found in Shigella boydii serotype 18 (strain CDC 3083-94 / BS512).